Reading from the N-terminus, the 234-residue chain is uncharacterized protein (234 aa).

Residues 212-234 form a disordered region; sequence GKHLKLDSNTTENKTTKQNETGG. Positions 220 to 234 are enriched in low complexity; the sequence is NTTENKTTKQNETGG.

This is an uncharacterized protein from Methanothermobacter thermautotrophicus (Methanobacterium thermoformicicum).